A 214-amino-acid chain; its full sequence is MGLAIAVGSFLISPFSKVIPDPVVDINPVSTTARGTEKAVFAGGCFWGLEAMFEEVRGVKDVQTGYSGGTEATANYARVSGGGTDHAESIEIVYDPAQVSYGELLKIFFSVGHDPTQVNRQGVDQGRQYRSAIFATTPEQKQVAQAYIDQLEESQAFDQAIATEVNDFDAFYPAEDYHQDFVQRNPAHPYVLVHDLPKLRKFRQQYSDKLKAQS.

Cys45 is a catalytic residue.

Belongs to the MsrA Met sulfoxide reductase family.

It carries out the reaction L-methionyl-[protein] + [thioredoxin]-disulfide + H2O = L-methionyl-(S)-S-oxide-[protein] + [thioredoxin]-dithiol. It catalyses the reaction [thioredoxin]-disulfide + L-methionine + H2O = L-methionine (S)-S-oxide + [thioredoxin]-dithiol. Has an important function as a repair enzyme for proteins that have been inactivated by oxidation. Catalyzes the reversible oxidation-reduction of methionine sulfoxide in proteins to methionine. This Synechocystis sp. (strain ATCC 27184 / PCC 6803 / Kazusa) protein is Peptide methionine sulfoxide reductase MsrA 2 (msrA2).